Reading from the N-terminus, the 313-residue chain is Homoserine O-succinyltransferase (313 aa).

The Acyl-thioester intermediate role is filled by C142. The substrate site is built by K163 and S192. The active-site Proton acceptor is H235. The active site involves E237. R249 lines the substrate pocket.

It belongs to the MetA family.

It is found in the cytoplasm. The enzyme catalyses L-homoserine + succinyl-CoA = O-succinyl-L-homoserine + CoA. It functions in the pathway amino-acid biosynthesis; L-methionine biosynthesis via de novo pathway; O-succinyl-L-homoserine from L-homoserine: step 1/1. Its function is as follows. Transfers a succinyl group from succinyl-CoA to L-homoserine, forming succinyl-L-homoserine. The sequence is that of Homoserine O-succinyltransferase from Shewanella sp. (strain ANA-3).